Consider the following 701-residue polypeptide: Ribosomal RNA large subunit methyltransferase K/L (701 aa).

The 112-residue stretch at 44–155 (QAYKICLWSR…SDKLTVYLDL (112 aa)) folds into the THUMP domain.

The protein belongs to the methyltransferase superfamily. RlmKL family.

The protein resides in the cytoplasm. It catalyses the reaction guanosine(2445) in 23S rRNA + S-adenosyl-L-methionine = N(2)-methylguanosine(2445) in 23S rRNA + S-adenosyl-L-homocysteine + H(+). The catalysed reaction is guanosine(2069) in 23S rRNA + S-adenosyl-L-methionine = N(2)-methylguanosine(2069) in 23S rRNA + S-adenosyl-L-homocysteine + H(+). Specifically methylates the guanine in position 2445 (m2G2445) and the guanine in position 2069 (m7G2069) of 23S rRNA. The polypeptide is Ribosomal RNA large subunit methyltransferase K/L (Pseudoalteromonas atlantica (strain T6c / ATCC BAA-1087)).